The chain runs to 366 residues: tRNA/tmRNA (uracil-C(5))-methyltransferase (366 aa).

Positions 190, 218, 223, 239, and 299 each coordinate S-adenosyl-L-methionine. The Nucleophile role is filled by cysteine 324. Residue glutamate 358 is the Proton acceptor of the active site.

This sequence belongs to the class I-like SAM-binding methyltransferase superfamily. RNA M5U methyltransferase family. TrmA subfamily.

The catalysed reaction is uridine(54) in tRNA + S-adenosyl-L-methionine = 5-methyluridine(54) in tRNA + S-adenosyl-L-homocysteine + H(+). The enzyme catalyses uridine(341) in tmRNA + S-adenosyl-L-methionine = 5-methyluridine(341) in tmRNA + S-adenosyl-L-homocysteine + H(+). Functionally, dual-specificity methyltransferase that catalyzes the formation of 5-methyluridine at position 54 (m5U54) in all tRNAs, and that of position 341 (m5U341) in tmRNA (transfer-mRNA). This is tRNA/tmRNA (uracil-C(5))-methyltransferase from Escherichia coli O7:K1 (strain IAI39 / ExPEC).